The sequence spans 155 residues: Small ribosomal subunit protein uS7 (155 aa).

The protein belongs to the universal ribosomal protein uS7 family. As to quaternary structure, part of the 30S ribosomal subunit. Contacts proteins S9 and S11.

Its function is as follows. One of the primary rRNA binding proteins, it binds directly to 16S rRNA where it nucleates assembly of the head domain of the 30S subunit. Is located at the subunit interface close to the decoding center, probably blocks exit of the E-site tRNA. The sequence is that of Small ribosomal subunit protein uS7 from Fervidobacterium nodosum (strain ATCC 35602 / DSM 5306 / Rt17-B1).